Consider the following 525-residue polypeptide: Bifunctional purine biosynthesis protein PurH (525 aa).

In terms of domain architecture, MGS-like spans 1–145 (MSNVERALIS…KNNASVGIVT (145 aa)).

The protein belongs to the PurH family.

It carries out the reaction (6R)-10-formyltetrahydrofolate + 5-amino-1-(5-phospho-beta-D-ribosyl)imidazole-4-carboxamide = 5-formamido-1-(5-phospho-D-ribosyl)imidazole-4-carboxamide + (6S)-5,6,7,8-tetrahydrofolate. It catalyses the reaction IMP + H2O = 5-formamido-1-(5-phospho-D-ribosyl)imidazole-4-carboxamide. The protein operates within purine metabolism; IMP biosynthesis via de novo pathway; 5-formamido-1-(5-phospho-D-ribosyl)imidazole-4-carboxamide from 5-amino-1-(5-phospho-D-ribosyl)imidazole-4-carboxamide (10-formyl THF route): step 1/1. Its pathway is purine metabolism; IMP biosynthesis via de novo pathway; IMP from 5-formamido-1-(5-phospho-D-ribosyl)imidazole-4-carboxamide: step 1/1. The sequence is that of Bifunctional purine biosynthesis protein PurH from Alcanivorax borkumensis (strain ATCC 700651 / DSM 11573 / NCIMB 13689 / SK2).